The following is a 581-amino-acid chain: A-type ATP synthase subunit A (581 aa).

232–239 (GPFGSGKT) is an ATP binding site.

The protein belongs to the ATPase alpha/beta chains family. In terms of assembly, has multiple subunits with at least A(3), B(3), C, D, E, F, H, I and proteolipid K(x).

It localises to the cell membrane. It catalyses the reaction ATP + H2O + 4 H(+)(in) = ADP + phosphate + 5 H(+)(out). In terms of biological role, component of the A-type ATP synthase that produces ATP from ADP in the presence of a proton gradient across the membrane. The A chain is the catalytic subunit. This Methanocorpusculum labreanum (strain ATCC 43576 / DSM 4855 / Z) protein is A-type ATP synthase subunit A.